Reading from the N-terminus, the 237-residue chain is Phosphoribosylaminoimidazole-succinocarboxamide synthase (237 aa).

It belongs to the SAICAR synthetase family.

It carries out the reaction 5-amino-1-(5-phospho-D-ribosyl)imidazole-4-carboxylate + L-aspartate + ATP = (2S)-2-[5-amino-1-(5-phospho-beta-D-ribosyl)imidazole-4-carboxamido]succinate + ADP + phosphate + 2 H(+). The protein operates within purine metabolism; IMP biosynthesis via de novo pathway; 5-amino-1-(5-phospho-D-ribosyl)imidazole-4-carboxamide from 5-amino-1-(5-phospho-D-ribosyl)imidazole-4-carboxylate: step 1/2. This Shigella sonnei (strain Ss046) protein is Phosphoribosylaminoimidazole-succinocarboxamide synthase.